We begin with the raw amino-acid sequence, 374 residues long: Probable inactive patatin-3-Kuras 1 (374 aa).

Residues 1 to 11 (MMLATTSSTFA) form the signal peptide. The region spanning 20–217 (LSIDGGGIKG…AAVDPSLLSI (198 aa)) is the PNPLA domain. The short motif at 24 to 29 (GGGIKG) is the GXGXXG element. N-linked (GlcNAc...) asparagine glycans are attached at residues asparagine 48 and asparagine 191. Residue aspartate 204 is the Proton acceptor of the active site. N-linked (GlcNAc...) asparagine glycosylation occurs at asparagine 257.

It belongs to the patatin family. In terms of processing, N-glycosylated. As to expression, tuber.

Its subcellular location is the vacuole. The polypeptide is Probable inactive patatin-3-Kuras 1 (pat3-k1) (Solanum tuberosum (Potato)).